The following is a 79-amino-acid chain: uncharacterized protein (79 aa).

Belongs to the asfivirus D79L family.

This is an uncharacterized protein from African swine fever virus (isolate Tick/South Africa/Pretoriuskop Pr4/1996) (ASFV).